A 445-amino-acid chain; its full sequence is Tubulin beta-4 chain (445 aa).

GTP contacts are provided by Gln-11, Glu-69, Ser-138, Gly-142, Thr-143, Gly-144, Asn-204, and Asn-226. Glu-69 contributes to the Mg(2+) binding site. Positions 421–445 are disordered; it reads EYQQYQDATADEEYDEEEEEERDAE. Residues 429-445 are compositionally biased toward acidic residues; the sequence is TADEEYDEEEEEERDAE.

This sequence belongs to the tubulin family. Dimer of alpha and beta chains. A typical microtubule is a hollow water-filled tube with an outer diameter of 25 nm and an inner diameter of 15 nM. Alpha-beta heterodimers associate head-to-tail to form protofilaments running lengthwise along the microtubule wall with the beta-tubulin subunit facing the microtubule plus end conferring a structural polarity. Microtubules usually have 13 protofilaments but different protofilament numbers can be found in some organisms and specialized cells. Mg(2+) serves as cofactor.

The protein localises to the cytoplasm. It is found in the cytoskeleton. Tubulin is the major constituent of microtubules, a cylinder consisting of laterally associated linear protofilaments composed of alpha- and beta-tubulin heterodimers. Microtubules grow by the addition of GTP-tubulin dimers to the microtubule end, where a stabilizing cap forms. Below the cap, tubulin dimers are in GDP-bound state, owing to GTPase activity of alpha-tubulin. The sequence is that of Tubulin beta-4 chain (TUBB4) from Triticum aestivum (Wheat).